Consider the following 428-residue polypeptide: Pyruvate dehydrogenase E1 component subunit alpha-3, chloroplastic (428 aa).

Residues 1–61 (MATAFAPTKL…NATRRSPVVS (61 aa)) constitute a chloroplast transit peptide. Pyruvate is bound by residues histidine 115, tyrosine 141, arginine 142, alanine 190, isoleucine 192, aspartate 227, glycine 228, and asparagine 256. Tyrosine 141, arginine 142, alanine 190, isoleucine 192, aspartate 227, glycine 228, asparagine 256, and histidine 325 together coordinate thiamine diphosphate. Aspartate 227 serves as a coordination point for Mg(2+). Position 256 (asparagine 256) interacts with Mg(2+).

Tetramer of 2 alpha and 2 beta subunits. It depends on thiamine diphosphate as a cofactor. The cofactor is Mg(2+).

Its subcellular location is the plastid. The protein localises to the chloroplast. The catalysed reaction is N(6)-[(R)-lipoyl]-L-lysyl-[protein] + pyruvate + H(+) = N(6)-[(R)-S(8)-acetyldihydrolipoyl]-L-lysyl-[protein] + CO2. Functionally, the pyruvate dehydrogenase complex catalyzes the overall conversion of pyruvate to acetyl-CoA and CO(2). It contains multiple copies of three enzymatic components: pyruvate dehydrogenase (E1), dihydrolipoamide acetyltransferase (E2) and lipoamide dehydrogenase (E3). The protein is Pyruvate dehydrogenase E1 component subunit alpha-3, chloroplastic (PDH-E1 ALPHA) of Arabidopsis thaliana (Mouse-ear cress).